The sequence spans 307 residues: Ubiquitin recognition factor in ER-associated degradation protein 1 (307 aa).

Met-1 bears the N-acetylmethionine mark. Phosphoserine occurs at positions 129, 231, 245, 247, and 299. Disordered stretches follow at residues Ser-231–Arg-256 and Gly-288–Pro-307.

This sequence belongs to the UFD1 family. Heterodimer with NPLOC4, this heterodimer binds VCP and inhibits Golgi membrane fusion. Interacts with USP13. Interacts with ZFAND2B; probably through VCP. Found in adult heart, skeletal muscle and pancreas, and in fetal liver and kidney.

The protein resides in the nucleus. It is found in the cytoplasm. It localises to the cytosol. The protein operates within protein degradation; proteasomal ubiquitin-dependent pathway. Its function is as follows. Essential component of the ubiquitin-dependent proteolytic pathway which degrades ubiquitin fusion proteins. The ternary complex containing UFD1, VCP and NPLOC4 binds ubiquitinated proteins and is necessary for the export of misfolded proteins from the ER to the cytoplasm, where they are degraded by the proteasome. The NPLOC4-UFD1-VCP complex regulates spindle disassembly at the end of mitosis and is necessary for the formation of a closed nuclear envelope. It may be involved in the development of some ectoderm-derived structures. Acts as a negative regulator of type I interferon production via the complex formed with VCP and NPLOC4, which binds to RIGI and recruits RNF125 to promote ubiquitination and degradation of RIGI. This is Ubiquitin recognition factor in ER-associated degradation protein 1 from Homo sapiens (Human).